We begin with the raw amino-acid sequence, 764 residues long: Myotubularin-related protein 10-B (764 aa).

Residues 208–649 enclose the Myotubularin phosphatase domain; sequence FESYSDWDRE…THIQIWKLCY (442 aa).

It belongs to the protein-tyrosine phosphatase family. Non-receptor class myotubularin subfamily.

In Xenopus laevis (African clawed frog), this protein is Myotubularin-related protein 10-B (mtmr10-b).